A 148-amino-acid chain; its full sequence is Cytochrome c6, chloroplastic (148 aa).

Residues 1–58 (MLQLANRSVRAKAARASQSARSVSCAAAKRGADVAPLTSALAVTASILLTTGAASASA) constitute a chloroplast transit peptide. Heme c contacts are provided by Cys-72, Cys-75, His-76, and Met-118.

This sequence belongs to the cytochrome c family. PetJ subfamily. As to quaternary structure, thought to function as a monomer, however 2 crystal forms are observed; a homodimer and homotrimer, suggesting the protein oligomerizes. Post-translationally, binds 1 heme c group covalently per subunit.

It is found in the plastid. Its subcellular location is the chloroplast thylakoid lumen. In terms of biological role, functions as an electron carrier between membrane-bound cytochrome b6-f and photosystem I in oxygenic photosynthesis. The polypeptide is Cytochrome c6, chloroplastic (petJ) (Chlamydomonas reinhardtii (Chlamydomonas smithii)).